Reading from the N-terminus, the 469-residue chain is RuvB-like helicase 2 (469 aa).

76-83 (GPPSTGKT) is an ATP binding site.

The protein belongs to the RuvB family. As to quaternary structure, may form heterododecamers with RVB1. Component of the SWR1 chromatin remodeling complex, the INO80 chromatin remodeling complex, and of the R2TP complex.

The protein resides in the nucleus. The enzyme catalyses ATP + H2O = ADP + phosphate + H(+). DNA helicase which participates in several chromatin remodeling complexes, including the SWR1 and the INO80 complexes. The SWR1 complex mediates the ATP-dependent exchange of histone H2A for the H2A variant HZT1 leading to transcriptional regulation of selected genes by chromatin remodeling. The INO80 complex remodels chromatin by shifting nucleosomes and is involved in DNA repair. Also involved in pre-rRNA processing. This is RuvB-like helicase 2 (rvb2) from Aspergillus fumigatus (strain ATCC MYA-4609 / CBS 101355 / FGSC A1100 / Af293) (Neosartorya fumigata).